The chain runs to 66 residues: DNA-directed RNA polymerase subunit Rpo10 (66 aa).

Cysteine 7, cysteine 10, cysteine 44, and cysteine 45 together coordinate Zn(2+).

The protein belongs to the archaeal Rpo10/eukaryotic RPB10 RNA polymerase subunit family. As to quaternary structure, part of the RNA polymerase complex. Zn(2+) serves as cofactor.

The protein localises to the cytoplasm. It carries out the reaction RNA(n) + a ribonucleoside 5'-triphosphate = RNA(n+1) + diphosphate. Functionally, DNA-dependent RNA polymerase (RNAP) catalyzes the transcription of DNA into RNA using the four ribonucleoside triphosphates as substrates. This chain is DNA-directed RNA polymerase subunit Rpo10, found in Pyrobaculum islandicum (strain DSM 4184 / JCM 9189 / GEO3).